Consider the following 614-residue polypeptide: 1-deoxy-D-xylulose-5-phosphate synthase (614 aa).

Residues histidine 74 and alanine 115 to serine 117 contribute to the thiamine diphosphate site. Mg(2+) is bound at residue aspartate 146. Thiamine diphosphate contacts are provided by residues glycine 147–alanine 148, asparagine 175, tyrosine 282, and glutamate 363. Position 175 (asparagine 175) interacts with Mg(2+).

It belongs to the transketolase family. DXPS subfamily. As to quaternary structure, homodimer. Mg(2+) is required as a cofactor. Thiamine diphosphate serves as cofactor.

The enzyme catalyses D-glyceraldehyde 3-phosphate + pyruvate + H(+) = 1-deoxy-D-xylulose 5-phosphate + CO2. It participates in metabolic intermediate biosynthesis; 1-deoxy-D-xylulose 5-phosphate biosynthesis; 1-deoxy-D-xylulose 5-phosphate from D-glyceraldehyde 3-phosphate and pyruvate: step 1/1. In terms of biological role, catalyzes the acyloin condensation reaction between C atoms 2 and 3 of pyruvate and glyceraldehyde 3-phosphate to yield 1-deoxy-D-xylulose-5-phosphate (DXP). In Nitrosospira multiformis (strain ATCC 25196 / NCIMB 11849 / C 71), this protein is 1-deoxy-D-xylulose-5-phosphate synthase.